The sequence spans 262 residues: Adenosylcobinamide-GDP ribazoletransferase (262 aa).

5 helical membrane-spanning segments follow: residues 41 to 61, 65 to 85, 115 to 132, 134 to 156, and 195 to 215; these read AFPLAAILITLPAAAIAFILG, ASSLFSAFLVVAVQAMVTGAL, IGTYGAVALILSFGLRVS, LAAFLPLLTPTGGGIALLATAAL, and GVLLALVLFFLAGIPTVAVWL.

Belongs to the CobS family. The cofactor is Mg(2+).

The protein localises to the cell inner membrane. It catalyses the reaction alpha-ribazole + adenosylcob(III)inamide-GDP = adenosylcob(III)alamin + GMP + H(+). The enzyme catalyses alpha-ribazole 5'-phosphate + adenosylcob(III)inamide-GDP = adenosylcob(III)alamin 5'-phosphate + GMP + H(+). The protein operates within cofactor biosynthesis; adenosylcobalamin biosynthesis; adenosylcobalamin from cob(II)yrinate a,c-diamide: step 7/7. Its function is as follows. Joins adenosylcobinamide-GDP and alpha-ribazole to generate adenosylcobalamin (Ado-cobalamin). Also synthesizes adenosylcobalamin 5'-phosphate from adenosylcobinamide-GDP and alpha-ribazole 5'-phosphate. The polypeptide is Adenosylcobinamide-GDP ribazoletransferase (Rhizobium meliloti (strain 1021) (Ensifer meliloti)).